A 491-amino-acid chain; its full sequence is Protein SET DOMAIN GROUP 40 (491 aa).

Residues 36–278 (HSLSVSDFPD…LGEQVLLCYG (243 aa)) form the SET domain.

The protein belongs to the class V-like SAM-binding methyltransferase superfamily.

This Arabidopsis thaliana (Mouse-ear cress) protein is Protein SET DOMAIN GROUP 40 (SDG40).